Reading from the N-terminus, the 439-residue chain is MGVANDSSPEYQWMSPHRLSDTVILGDCLYFNNIMSQLDLHQNWAPPVRLLNYFKNFNKETLLKIEENDYINSSFFQQKDKRFYPINDDFYHISTGGYGIVFKIDNYVVKFVFEATKLYSPMETTAEFTVPKFLYNNLKGDEKKLIVCAWAMGLNYKLTFLHTLYKRVLHMLLLLIQTMDGQELSLRYSSKVFLKAFNERKDSIKFVKLLSHFYPAVINSNINVINYFNRMFHFFEHEKRTNYEYERGNIIIFPLALYSADKVDTELAIKLGFKSLVQYIKFIFLQMALLYIKIYELPCCDNFLHADLKPDNILLFDSNEPIIIHLKDKKFVFNERIKSALNDFDFSQVAGIINKKIKNNFKVKHNWYYDFHFFVHTLLKTYPEIEKDIEFSTALEEFIMCTKTDCDKYRLKVSILHPISFLEKFIMRDIFSDWINGGN.

The 353-residue stretch at 87–439 folds into the Protein kinase domain; the sequence is NDDFYHISTG…IFSDWINGGN (353 aa). Residues 93-101 and lysine 117 each bind ATP; that span reads ISTGGYGIV. Aspartate 307 (proton acceptor) is an active-site residue.

It belongs to the protein kinase superfamily. Ser/Thr protein kinase family. Phosphorylated in vivo. Autophosphorylated in vitro.

It localises to the host endoplasmic reticulum. Its subcellular location is the host endoplasmic reticulum-Golgi intermediate compartment. The enzyme catalyses L-seryl-[protein] + ATP = O-phospho-L-seryl-[protein] + ADP + H(+). It carries out the reaction L-threonyl-[protein] + ATP = O-phospho-L-threonyl-[protein] + ADP + H(+). Functionally, essential serine-protein kinase involved in the early stage of virion morphogenesis. The chain is Serine/threonine-protein kinase 2 (OPG054) from Vaccinia virus (strain Tian Tan) (VACV).